Consider the following 283-residue polypeptide: Nucleotide-binding protein ACIAD3059 (283 aa).

An ATP-binding site is contributed by 9–16; the sequence is GQSGSGKS. 59–62 lines the GTP pocket; it reads DVRS.

Belongs to the RapZ-like family.

Displays ATPase and GTPase activities. The chain is Nucleotide-binding protein ACIAD3059 from Acinetobacter baylyi (strain ATCC 33305 / BD413 / ADP1).